Here is a 201-residue protein sequence, read N- to C-terminus: Small ribosomal subunit protein uS4c (201 aa).

A disordered region spans residues 15 to 44 (LGALPGLTNKRPRAGSDLRNQSRSGKKSQY). The region spanning 89–149 (MRLDNILFRL…DEQNSRALIQ (61 aa)) is the S4 RNA-binding domain.

Belongs to the universal ribosomal protein uS4 family. As to quaternary structure, part of the 30S ribosomal subunit. Contacts protein S5. The interaction surface between S4 and S5 is involved in control of translational fidelity.

The protein localises to the plastid. It is found in the chloroplast. Its function is as follows. One of the primary rRNA binding proteins, it binds directly to 16S rRNA where it nucleates assembly of the body of the 30S subunit. Functionally, with S5 and S12 plays an important role in translational accuracy. The chain is Small ribosomal subunit protein uS4c (rps4) from Daucus carota (Wild carrot).